We begin with the raw amino-acid sequence, 420 residues long: Trichothecene biosynthesis transcription regulator TRI10 (420 aa).

It belongs to the TRI10 transcription regulator family.

It localises to the nucleus. Transcriptional activator of all of the trichothecene biosynthesis genes. Acts upstream of the cluster-encoded transcription factor TRI6 and is necessary for full expression of both the other trichothecene genes and the genes for the primary metabolic pathway that precedes the trichothecene biosynthetic pathway. The polypeptide is Trichothecene biosynthesis transcription regulator TRI10 (Fusarium sporotrichioides).